Consider the following 192-residue polypeptide: Ras-like GTP-binding protein rhoA (192 aa).

A GTP-binding site is contributed by 12–19 (GDGACGKT). The short motif at 34 to 42 (YVPTVFENY) is the Effector region element. GTP contacts are provided by residues 59–63 (DTAGQ) and 117–120 (NKRD). Cysteine 189 carries the post-translational modification Cysteine methyl ester. Cysteine 189 carries S-geranylgeranyl cysteine lipidation. Residues 190–192 (MIL) constitute a propeptide, removed in mature form.

Belongs to the small GTPase superfamily. Rho family. As to quaternary structure, may interact with unc-89 (via DN and PH domains). Interacts with bli-3 and memo-1. In terms of tissue distribution, in larvae and adults, enriched at the tip of the head where the anterior sensory organ is located and in the pharyngeal nerve ring (at protein level). In embryos, enriched at the boundaries of dorsal cells undergoing intercalation, ventral enclosure and elongation.

It is found in the cell membrane. Its subcellular location is the cytoplasm. The protein localises to the cytoskeleton. The protein resides in the cell cortex. With respect to regulation, GTP hydrolysis is stimulated by unc-89. In terms of biological role, required for ventral migration of epidermal cells during ventral enclosure in the embryo and for cell elongation. Also required for ventral migration of P cells during larval development. Involved in asymmetric spindle positioning during anaphase and establishment of cell polarity during embryo development. In adults, involved in regulation of multiple processes including locomotion, pharyngeal pumping, fecundity, ovulation, defecation and body morphology. In body wall muscles, regulates organization of myosin thick filaments downstream of unc-89. Association with the oxidase bli-3 promotes ROS production and this interaction may be modulated by memo-1, in order to control the oxidative stress response and longevity. This chain is Ras-like GTP-binding protein rhoA, found in Caenorhabditis elegans.